A 450-amino-acid polypeptide reads, in one-letter code: Glucose-6-phosphate isomerase (450 aa).

Position 39 is a phosphothreonine (threonine 39). Glutamate 291 serves as the catalytic Proton donor. Active-site residues include histidine 312 and lysine 426.

The protein belongs to the GPI family.

It is found in the cytoplasm. It catalyses the reaction alpha-D-glucose 6-phosphate = beta-D-fructose 6-phosphate. It functions in the pathway carbohydrate biosynthesis; gluconeogenesis. The protein operates within carbohydrate degradation; glycolysis; D-glyceraldehyde 3-phosphate and glycerone phosphate from D-glucose: step 2/4. Its function is as follows. Catalyzes the reversible isomerization of glucose-6-phosphate to fructose-6-phosphate. This Bacillus cereus (strain G9842) protein is Glucose-6-phosphate isomerase.